A 702-amino-acid chain; its full sequence is Ribosomal RNA large subunit methyltransferase K/L (702 aa).

The region spanning 43–154 (LIYQSLMWSR…KETASIALDL (112 aa)) is the THUMP domain.

The protein belongs to the methyltransferase superfamily. RlmKL family.

The protein resides in the cytoplasm. It carries out the reaction guanosine(2445) in 23S rRNA + S-adenosyl-L-methionine = N(2)-methylguanosine(2445) in 23S rRNA + S-adenosyl-L-homocysteine + H(+). The catalysed reaction is guanosine(2069) in 23S rRNA + S-adenosyl-L-methionine = N(2)-methylguanosine(2069) in 23S rRNA + S-adenosyl-L-homocysteine + H(+). In terms of biological role, specifically methylates the guanine in position 2445 (m2G2445) and the guanine in position 2069 (m7G2069) of 23S rRNA. The protein is Ribosomal RNA large subunit methyltransferase K/L of Salmonella gallinarum (strain 287/91 / NCTC 13346).